The sequence spans 453 residues: Cholecystokinin receptor (453 aa).

Over Met1–Ser64 the chain is Extracellular. N-linked (GlcNAc...) asparagine glycans are attached at residues Asn9, Asn22, Asn30, Asn35, and Asn39. Residues Asp65–Val94 traverse the membrane as a helical segment. At Met95 to Asn104 the chain is on the cytoplasmic side. The helical transmembrane segment at Ser105 to Met131 threads the bilayer. The Extracellular segment spans residues Glu132–Arg142. Cysteines 141 and 223 form a disulfide. The chain crosses the membrane as a helical span at residues Ala143–Ile164. Residues Glu165–His184 are Cytoplasmic-facing. Residues Ala185–Val205 traverse the membrane as a helical segment. Residues Tyr206–Tyr237 are Extracellular-facing. The chain crosses the membrane as a helical span at residues Val238–Arg261. Topologically, residues Glu262 to Arg343 are cytoplasmic. Residues Met344 to Thr364 traverse the membrane as a helical segment. Topologically, residues Trp365–Gly379 are extracellular. The helical transmembrane segment at Ala380–Met403 threads the bilayer. The S-palmitoyl cysteine moiety is linked to residue Cys401. Topologically, residues Asn404–Ala453 are cytoplasmic.

The protein belongs to the G-protein coupled receptor 1 family. Brain and stomach.

Its subcellular location is the cell membrane. Receptor for cholecystokinin. This receptor mediates its action by association with G proteins that activate a phosphatidylinositol-calcium second messenger system. Has high affinity for CCK-8 and low affinities for gastrin-17-I, CCK-4, and unsulfated CCK-8. The chain is Cholecystokinin receptor (cckar) from Xenopus laevis (African clawed frog).